The sequence spans 184 residues: Nucleoside triphosphate pyrophosphatase (184 aa).

Catalysis depends on aspartate 66, which acts as the Proton acceptor.

It belongs to the Maf family. A divalent metal cation serves as cofactor.

Its subcellular location is the cytoplasm. It catalyses the reaction a ribonucleoside 5'-triphosphate + H2O = a ribonucleoside 5'-phosphate + diphosphate + H(+). The catalysed reaction is a 2'-deoxyribonucleoside 5'-triphosphate + H2O = a 2'-deoxyribonucleoside 5'-phosphate + diphosphate + H(+). Its function is as follows. Nucleoside triphosphate pyrophosphatase. May have a dual role in cell division arrest and in preventing the incorporation of modified nucleotides into cellular nucleic acids. This chain is Nucleoside triphosphate pyrophosphatase, found in Prochlorococcus marinus (strain MIT 9313).